Here is a 66-residue protein sequence, read N- to C-terminus: Large ribosomal subunit protein bL35 (66 aa).

This sequence belongs to the bacterial ribosomal protein bL35 family.

This chain is Large ribosomal subunit protein bL35, found in Synechococcus sp. (strain ATCC 27144 / PCC 6301 / SAUG 1402/1) (Anacystis nidulans).